The primary structure comprises 183 residues: Phosphinothricin N-acetyltransferase (183 aa).

The N-acetyltransferase domain occupies 8-169; sequence VEIRPATAAD…DVGFWQRDFE (162 aa). Acetyl-CoA-binding positions include 91–93, 99–104, and Asn-130; these read VYV and RLGLGS.

Belongs to the acetyltransferase family. PAT/BAR subfamily.

It carries out the reaction phosphinothricin + acetyl-CoA = N-acetylphosphinothricin + CoA + H(+). Functionally, inactivates phosphinothricin (PPT) by transfer of an acetyl group from acetyl CoA. This enzyme is an effector of phosphinothricin tripeptide (PTT or bialaphos) resistance. This is Phosphinothricin N-acetyltransferase from Streptomyces viridochromogenes (strain DSM 40736 / JCM 4977 / BCRC 1201 / Tue 494).